The chain runs to 75 residues: Porwaprin-b (75 aa).

The first 24 residues, 1-24 (MSSGGLLLLLGLLTLWAELTPVSG), serve as a signal peptide directing secretion. The region spanning 27 to 72 (RPVKPGLCPPRPQKPPCVKECKNDWSCRGEQKCCHYGCIYECRDPI) is the WAP domain. 4 cysteine pairs are disulfide-bonded: cysteine 34–cysteine 60, cysteine 43–cysteine 64, cysteine 47–cysteine 59, and cysteine 53–cysteine 68.

The protein belongs to the venom waprin family. Expressed by the venom gland.

It is found in the secreted. In terms of biological role, damages membranes of susceptible bacteria. Has no hemolytic activity. Not toxic to mice. Does not inhibit the proteinases elastase and cathepsin G. The polypeptide is Porwaprin-b (Pseudechis porphyriacus (Red-bellied black snake)).